A 265-amino-acid chain; its full sequence is Ribosomal RNA small subunit methyltransferase A (265 aa).

S-adenosyl-L-methionine is bound by residues H11, L13, G38, E59, D83, and N100.

This sequence belongs to the class I-like SAM-binding methyltransferase superfamily. rRNA adenine N(6)-methyltransferase family. RsmA subfamily.

The protein resides in the cytoplasm. The catalysed reaction is adenosine(1518)/adenosine(1519) in 16S rRNA + 4 S-adenosyl-L-methionine = N(6)-dimethyladenosine(1518)/N(6)-dimethyladenosine(1519) in 16S rRNA + 4 S-adenosyl-L-homocysteine + 4 H(+). Its function is as follows. Specifically dimethylates two adjacent adenosines (A1518 and A1519) in the loop of a conserved hairpin near the 3'-end of 16S rRNA in the 30S particle. May play a critical role in biogenesis of 30S subunits. The chain is Ribosomal RNA small subunit methyltransferase A from Thermosynechococcus vestitus (strain NIES-2133 / IAM M-273 / BP-1).